Consider the following 201-residue polypeptide: uncharacterized protein (201 aa).

This is an uncharacterized protein from Cestrum yellow leaf curling virus (CmYLCV).